A 250-amino-acid chain; its full sequence is Flavin-dependent thymidylate synthase (250 aa).

The ThyX domain maps to 7–233 (LRVQLIAKTE…PQVFSDFEIT (227 aa)). Residues S71, 95–97 (RHR), and Q103 contribute to the FAD site. Residues 92–95 (ELIR), 103–107 (QLSQR), and R172 contribute to the dUMP site. A ThyX motif motif is present at residues 95–105 (RHRHFSYSQLS). FAD is bound by residues 188-190 (NYR) and H194. R199 contacts dUMP. Catalysis depends on R199, which acts as the Involved in ionization of N3 of dUMP, leading to its activation.

Belongs to the thymidylate synthase ThyX family. In terms of assembly, homotetramer. Requires FAD as cofactor.

It carries out the reaction dUMP + (6R)-5,10-methylene-5,6,7,8-tetrahydrofolate + NADPH + H(+) = dTMP + (6S)-5,6,7,8-tetrahydrofolate + NADP(+). It participates in pyrimidine metabolism; dTTP biosynthesis. Catalyzes the reductive methylation of 2'-deoxyuridine-5'-monophosphate (dUMP) to 2'-deoxythymidine-5'-monophosphate (dTMP) while utilizing 5,10-methylenetetrahydrofolate (mTHF) as the methyl donor, and NADPH and FADH(2) as the reductant. This Mycolicibacterium gilvum (strain PYR-GCK) (Mycobacterium gilvum (strain PYR-GCK)) protein is Flavin-dependent thymidylate synthase.